Consider the following 267-residue polypeptide: Cell division protein FtsQ (267 aa).

Topologically, residues 1–32 (MRKKTSSNKKKQTKKTNNISLRRKLRLIYKKA) are cytoplasmic. A helical membrane pass occupies residues 33–53 (ILGLKIALIIFVCLFVFTKYF). At 54–267 (AGIKTYLTTN…DKNKYYIEKY (214 aa)) the chain is on the periplasmic side. One can recognise a POTRA domain in the interval 73–141 (FKLENVIIEG…NTVYIKLFER (69 aa)).

Belongs to the FtsQ/DivIB family. FtsQ subfamily.

The protein localises to the cell inner membrane. Essential cell division protein. The chain is Cell division protein FtsQ from Rickettsia felis (strain ATCC VR-1525 / URRWXCal2) (Rickettsia azadi).